A 156-amino-acid chain; its full sequence is ATP synthase subunit b (156 aa).

A helical transmembrane segment spans residues L7 to L29.

It belongs to the ATPase B chain family. F-type ATPases have 2 components, F(1) - the catalytic core - and F(0) - the membrane proton channel. F(1) has five subunits: alpha(3), beta(3), gamma(1), delta(1), epsilon(1). F(0) has three main subunits: a(1), b(2) and c(10-14). The alpha and beta chains form an alternating ring which encloses part of the gamma chain. F(1) is attached to F(0) by a central stalk formed by the gamma and epsilon chains, while a peripheral stalk is formed by the delta and b chains.

The protein localises to the cell inner membrane. Its function is as follows. F(1)F(0) ATP synthase produces ATP from ADP in the presence of a proton or sodium gradient. F-type ATPases consist of two structural domains, F(1) containing the extramembraneous catalytic core and F(0) containing the membrane proton channel, linked together by a central stalk and a peripheral stalk. During catalysis, ATP synthesis in the catalytic domain of F(1) is coupled via a rotary mechanism of the central stalk subunits to proton translocation. Component of the F(0) channel, it forms part of the peripheral stalk, linking F(1) to F(0). This is ATP synthase subunit b from Burkholderia vietnamiensis (strain G4 / LMG 22486) (Burkholderia cepacia (strain R1808)).